Here is a 239-residue protein sequence, read N- to C-terminus: Probable transcriptional regulatory protein CD630_07950 (239 aa).

This sequence belongs to the TACO1 family.

It is found in the cytoplasm. The sequence is that of Probable transcriptional regulatory protein CD630_07950 from Clostridioides difficile (strain 630) (Peptoclostridium difficile).